The primary structure comprises 58 residues: Curromycin resistance protein (58 aa).

The interval Met1–Arg37 is disordered. The span at Pro25 to Arg37 shows a compositional bias: low complexity.

The chain is Curromycin resistance protein (cre) from Streptomyces hygroscopicus.